The following is a 470-amino-acid chain: 3-isopropylmalate dehydratase large subunit (470 aa).

The [4Fe-4S] cluster site is built by cysteine 349, cysteine 409, and cysteine 412.

Belongs to the aconitase/IPM isomerase family. LeuC type 1 subfamily. In terms of assembly, heterodimer of LeuC and LeuD. It depends on [4Fe-4S] cluster as a cofactor.

The enzyme catalyses (2R,3S)-3-isopropylmalate = (2S)-2-isopropylmalate. It functions in the pathway amino-acid biosynthesis; L-leucine biosynthesis; L-leucine from 3-methyl-2-oxobutanoate: step 2/4. Catalyzes the isomerization between 2-isopropylmalate and 3-isopropylmalate, via the formation of 2-isopropylmaleate. In Campylobacter jejuni subsp. jejuni serotype O:2 (strain ATCC 700819 / NCTC 11168), this protein is 3-isopropylmalate dehydratase large subunit.